The chain runs to 358 residues: Adenosine deaminase (358 aa).

Zn(2+) contacts are provided by histidine 14 and histidine 16. Residues histidine 16, aspartate 18, and glycine 183 each coordinate substrate. Residue histidine 212 participates in Zn(2+) binding. Glutamate 215 acts as the Proton donor in catalysis. Aspartate 294 is a Zn(2+) binding site. Aspartate 295 is a substrate binding site.

This sequence belongs to the metallo-dependent hydrolases superfamily. Adenosine and AMP deaminases family. Zn(2+) is required as a cofactor.

Its subcellular location is the cell membrane. The protein resides in the cell junction. It is found in the cytoplasmic vesicle lumen. It localises to the cytoplasm. The protein localises to the lysosome. The catalysed reaction is adenosine + H2O + H(+) = inosine + NH4(+). It carries out the reaction 2'-deoxyadenosine + H2O + H(+) = 2'-deoxyinosine + NH4(+). In terms of biological role, catalyzes the hydrolytic deamination of adenosine and 2-deoxyadenosine. Plays an important role in purine metabolism and in adenosine homeostasis. Modulates signaling by extracellular adenosine, and so contributes indirectly to cellular signaling events. May act as a positive regulator of T-cell coactivation. This is Adenosine deaminase (ada) from Xenopus tropicalis (Western clawed frog).